The primary structure comprises 599 residues: Proline--tRNA ligase (599 aa).

Belongs to the class-II aminoacyl-tRNA synthetase family. ProS type 1 subfamily. As to quaternary structure, homodimer.

Its subcellular location is the cytoplasm. The catalysed reaction is tRNA(Pro) + L-proline + ATP = L-prolyl-tRNA(Pro) + AMP + diphosphate. Its function is as follows. Catalyzes the attachment of proline to tRNA(Pro) in a two-step reaction: proline is first activated by ATP to form Pro-AMP and then transferred to the acceptor end of tRNA(Pro). As ProRS can inadvertently accommodate and process non-cognate amino acids such as alanine and cysteine, to avoid such errors it has two additional distinct editing activities against alanine. One activity is designated as 'pretransfer' editing and involves the tRNA(Pro)-independent hydrolysis of activated Ala-AMP. The other activity is designated 'posttransfer' editing and involves deacylation of mischarged Ala-tRNA(Pro). The misacylated Cys-tRNA(Pro) is not edited by ProRS. This is Proline--tRNA ligase from Prochlorococcus marinus (strain MIT 9303).